Consider the following 236-residue polypeptide: Small ribosomal subunit protein uS5 (236 aa).

One can recognise an S5 DRBM domain in the interval 61–124 (ENQEIIDIAL…NYAKLNIIEI (64 aa)).

Belongs to the universal ribosomal protein uS5 family. In terms of assembly, part of the 30S ribosomal subunit. Contacts protein S4.

With S4 and S12 plays an important role in translational accuracy. The chain is Small ribosomal subunit protein uS5 from Pyrococcus horikoshii (strain ATCC 700860 / DSM 12428 / JCM 9974 / NBRC 100139 / OT-3).